The chain runs to 200 residues: Small ribosomal subunit protein uS4 (200 aa).

A disordered region spans residues 22–41; sequence TGKELQKRPYAPGQHGPNQR. In terms of domain architecture, S4 RNA-binding spans 92–152; the sequence is SRLDNLVYRM…EKSRNLQVIK (61 aa).

It belongs to the universal ribosomal protein uS4 family. In terms of assembly, part of the 30S ribosomal subunit. Contacts protein S5. The interaction surface between S4 and S5 is involved in control of translational fidelity.

In terms of biological role, one of the primary rRNA binding proteins, it binds directly to 16S rRNA where it nucleates assembly of the body of the 30S subunit. Functionally, with S5 and S12 plays an important role in translational accuracy. The chain is Small ribosomal subunit protein uS4 from Halalkalibacterium halodurans (strain ATCC BAA-125 / DSM 18197 / FERM 7344 / JCM 9153 / C-125) (Bacillus halodurans).